The chain runs to 438 residues: GTPase Obg (438 aa).

The 159-residue stretch at 2-160 (SMFLDQVTID…RKIELELKVL (159 aa)) folds into the Obg domain. The tract at residues 128–147 (NIRFASPRNPAPEIAENGEP) is disordered. An OBG-type G domain is found at 161 to 339 (ADVGLVGFPS…LLNATADLLE (179 aa)). Residues 167 to 174 (GFPSVGKS), 192 to 196 (FTTLV), 214 to 217 (DLPG), 284 to 287 (NKMD), and 320 to 322 (SGV) contribute to the GTP site. 2 residues coordinate Mg(2+): Ser-174 and Thr-194. The 79-residue stretch at 360–438 (GFQPEGPEFT…IGNFEFEFVE (79 aa)) folds into the OCT domain.

Belongs to the TRAFAC class OBG-HflX-like GTPase superfamily. OBG GTPase family. In terms of assembly, monomer. Mg(2+) serves as cofactor.

The protein localises to the cytoplasm. An essential GTPase which binds GTP, GDP and possibly (p)ppGpp with moderate affinity, with high nucleotide exchange rates and a fairly low GTP hydrolysis rate. Plays a role in control of the cell cycle, stress response, ribosome biogenesis and in those bacteria that undergo differentiation, in morphogenesis control. This is GTPase Obg from Enterococcus faecalis (strain ATCC 700802 / V583).